The primary structure comprises 571 residues: Proline--tRNA ligase (571 aa).

This sequence belongs to the class-II aminoacyl-tRNA synthetase family. ProS type 1 subfamily. In terms of assembly, homodimer.

Its subcellular location is the cytoplasm. It carries out the reaction tRNA(Pro) + L-proline + ATP = L-prolyl-tRNA(Pro) + AMP + diphosphate. Its function is as follows. Catalyzes the attachment of proline to tRNA(Pro) in a two-step reaction: proline is first activated by ATP to form Pro-AMP and then transferred to the acceptor end of tRNA(Pro). As ProRS can inadvertently accommodate and process non-cognate amino acids such as alanine and cysteine, to avoid such errors it has two additional distinct editing activities against alanine. One activity is designated as 'pretransfer' editing and involves the tRNA(Pro)-independent hydrolysis of activated Ala-AMP. The other activity is designated 'posttransfer' editing and involves deacylation of mischarged Ala-tRNA(Pro). The misacylated Cys-tRNA(Pro) is not edited by ProRS. This Mannheimia succiniciproducens (strain KCTC 0769BP / MBEL55E) protein is Proline--tRNA ligase.